We begin with the raw amino-acid sequence, 307 residues long: MPEIYHYLQQLVNGLTVGSTYALIAIGYTMVYGIIGMINFAHGEVYMIGSYIAFIAITLLAMMGLDSVPLMMLAAFAASIIVTSAFGYSIERVAYRPLRGGNRLIPLISAIGMSIFLQNAVMLSQDSKEKAIPTLLPGNFVFGESSMNGVVISYMQILIFVVTFLVMFGLTLFISRSRLGRACRACAEDLKMTNLLGINSNNIIALTFVIGAALAAVAAVLLGMQYGVINPGIGFLAGIKAFTAAVLGGIGSIPGAMLGGLLLGVAEAFGADVFGDQYKDVVAFGLLILVLLFRPTGILGRPEVEKV.

The next 10 membrane-spanning stretches (helical) occupy residues 21-41 (YALIAIGYTMVYGIIGMINFA), 45-65 (VYMIGSYIAFIAITLLAMMGL), 70-90 (LMMLAAFAASIIVTSAFGYSI), 104-124 (LIPLISAIGMSIFLQNAVMLS), 132-152 (IPTLLPGNFVFGESSMNGVVI), 154-174 (YMQILIFVVTFLVMFGLTLFI), 203-223 (IIALTFVIGAALAAVAAVLLG), 224-244 (MQYGVINPGIGFLAGIKAFTA), 245-265 (AVLGGIGSIPGAMLGGLLLGV), and 280-300 (DVVAFGLLILVLLFRPTGILG).

This sequence belongs to the binding-protein-dependent transport system permease family. LivHM subfamily.

Its subcellular location is the cell inner membrane. Component of the high affinity leucine, isoleucine, valine, transport system (LIV-I), which is operative without Na(+) and is specific for alanine and threonine, in addition to branched-chain amino acids. The polypeptide is High-affinity branched-chain amino acid transport system permease protein BraD (braD) (Pseudomonas aeruginosa (strain ATCC 15692 / DSM 22644 / CIP 104116 / JCM 14847 / LMG 12228 / 1C / PRS 101 / PAO1)).